A 393-amino-acid chain; its full sequence is MMGLGNGRRSMKSPPLILAALVACVIVLGFNYWIASSRSVELQTRIVELEGRVRRAAAERGAVELKKNEFQGELQKQREQLDRIQSSHSFQLENVNKLHQDEKAVLVNNITTGEKLIRDLQDQLKALQRSYSSLQQDIFQFQKNQTSLEKKFSYDLNQCISQMTEVKEQCDERIEEVIRKRNEAPGSRDLAETNNQHQQALKPQPKLQEEVPSEEQMPQEKGDVPRNKSQIPAPNSESLGLKPQVQNEETNEIQAVGEEHQQASIQGQAVADGTRVGAEKLDQHTQLPAGLLARPEEDSQYPEREQLVIRDRQEQQRASEEGGGQKNPGDEYDMDENEAESEREKQAALAGNDRNINVLNADAQKRGIINVPVGSERQSHILNQVGIHIPQQA.

Met1 carries the N-acetylmethionine modification. Over 1 to 12 (MMGLGNGRRSMK) the chain is Cytoplasmic. A helical; Signal-anchor for type II membrane protein transmembrane segment spans residues 13–35 (SPPLILAALVACVIVLGFNYWIA). Topologically, residues 36 to 393 (SSRSVELQTR…QVGIHIPQQA (358 aa)) are lumenal. The stretch at 40 to 183 (VELQTRIVEL…IEEVIRKRNE (144 aa)) forms a coiled coil. N-linked (GlcNAc...) asparagine glycosylation is found at Asn109 and Asn144. Disordered stretches follow at residues 180-247 (KRNE…QVQN) and 284-352 (HTQL…LAGN). Residue Ser187 is modified to Phosphoserine. Polar residues-rich tracts occupy residues 192-201 (ETNNQHQQAL) and 227-247 (NKSQIPAPNSESLGLKPQVQN). An N-linked (GlcNAc...) asparagine glycan is attached at Asn227. A compositionally biased stretch (basic and acidic residues) spans 294 to 320 (RPEEDSQYPEREQLVIRDRQEQQRASE). Residues 330-339 (DEYDMDENEA) show a composition bias toward acidic residues.

Belongs to the GOLM family. In terms of assembly, interacts with DYM. Glycosylated. Post-translationally, phosphorylation sites are present in the extracellular medium.

The protein resides in the golgi apparatus. It is found in the cis-Golgi network membrane. Functionally, unknown. Cellular response protein to viral infection. The sequence is that of Golgi membrane protein 1 (Golm1) from Mus musculus (Mouse).